The sequence spans 488 residues: Ribulose bisphosphate carboxylase large chain (488 aa).

2 residues coordinate substrate: asparagine 127 and threonine 177. Lysine 179 functions as the Proton acceptor in the catalytic mechanism. Lysine 181 contributes to the substrate binding site. The Mg(2+) site is built by lysine 205, aspartate 207, and glutamate 208. Lysine 205 carries the post-translational modification N6-carboxylysine. Histidine 297 serves as the catalytic Proton acceptor. Positions 298, 330, and 382 each coordinate substrate.

The protein belongs to the RuBisCO large chain family. Type I subfamily. In terms of assembly, heterohexadecamer of 8 large chains and 8 small chains. Requires Mg(2+) as cofactor.

It localises to the plastid. The protein localises to the chloroplast. It carries out the reaction 2 (2R)-3-phosphoglycerate + 2 H(+) = D-ribulose 1,5-bisphosphate + CO2 + H2O. The enzyme catalyses D-ribulose 1,5-bisphosphate + O2 = 2-phosphoglycolate + (2R)-3-phosphoglycerate + 2 H(+). In terms of biological role, ruBisCO catalyzes two reactions: the carboxylation of D-ribulose 1,5-bisphosphate, the primary event in carbon dioxide fixation, as well as the oxidative fragmentation of the pentose substrate in the photorespiration process. Both reactions occur simultaneously and in competition at the same active site. In Pylaiella littoralis (Seaweed), this protein is Ribulose bisphosphate carboxylase large chain.